A 179-amino-acid chain; its full sequence is Large ribosomal subunit protein uL5 (179 aa).

Belongs to the universal ribosomal protein uL5 family. In terms of assembly, part of the 50S ribosomal subunit; part of the 5S rRNA/L5/L18/L25 subcomplex. Contacts the 5S rRNA and the P site tRNA. Forms a bridge to the 30S subunit in the 70S ribosome.

In terms of biological role, this is one of the proteins that bind and probably mediate the attachment of the 5S RNA into the large ribosomal subunit, where it forms part of the central protuberance. In the 70S ribosome it contacts protein S13 of the 30S subunit (bridge B1b), connecting the 2 subunits; this bridge is implicated in subunit movement. Contacts the P site tRNA; the 5S rRNA and some of its associated proteins might help stabilize positioning of ribosome-bound tRNAs. This is Large ribosomal subunit protein uL5 from Pseudomonas fluorescens (strain SBW25).